A 1173-amino-acid polypeptide reads, in one-letter code: MPVVWPTLLDLSRDECKRILRKLELEAYAGVISALRAQGDLTKDKKELLGELTRVLSISTERHRAEVRRAVNDERLTTIAHHMSGPNSSSEWSIEGRRLVPLMPRLVPQTAFTVMANAVANATAHQNASLPLPAETANKEVVVCYSYTSTTSTPPSASAPSSSSAAVKSPRPASPASNVVVLPSGSTVYVKSVSCSDEDEKPRKRRRTSSSSSSPVLLKEVPKVAVTAPGPKTITLPVSGGPKISNLMQSIANSLPPHMSPVKITFTKPSTQTTNTTTQKVIIVTTSPSSNFVPNILSKSHNYAAVSKLVSSAALTASSQKQTMVISAGGSSVAPGPGPVAVTTVVSSTPSVVMSTVAQAGSAAVKVASTRLPSPKALIGSPSQILQIPKAQQAVLQSAAPKALQGSISTAQSTALAAAGPGAKPTIQIKQESGVKIITQQMQPSKILPKPSSAALPSSSSAPIMVVSSNGAIMTTKLVSTPTGSASTYTRPTVSPMGTRVATSPAGATYVKTTSGSIITVVPKALATLGGKIITTSMVSGTTTKITTIPMTSKPNVIVVQKTTGKGTTIQGLPGKNVVTTLLNAGGEKTLQAIPGAKPAIITASRPITKMIVTQPKSLGAGVQPSTTTKIIPTKIVYGQQGKTQVLIKPKPMAFQTAVVSEQTRQLVSETLQQVNRSAENNTTSTHTSAAAAGLENRDDTHTYTEGSPVPSDSTHDAPPVVHLISSRGQEWAEQEVSVESSPALIYQELTAESQSATSTIKALLELQQTSVKEKSEAKPRQHTIDLSQMAVPIPVSAEQRESPEPSGQSAAESDAHTEFIPIGKVSKAAEVSASSTPGQSASAVSAAPHVVKISTAAVTTQQVEAQVKPQQEQVLVEECELEGDTLDPQTGLFYRSSPQQQLSRVCEAASSSSSSSSSSSRRAEPPLTVKILTHRSSSSAPATAASANTPHTPQLPRLQQAPTTHNRPNTHTQLSQPPPLQAHHPVGSSKTSSGAQVQQPIITQGATVTKITFGAPHVPRAPVSSSSSSEAALKLQAESSSEKPSVPDILKISMMEAEIDPGAEPMLVDSSSDCGPLTKAPAGPSLISSSKQTLAHGPFSRKSKELDIIQVIPQYSIMPDSSQSNVVVEPSGFLEISDYTSQRLDEEQAMEQEVDSSNDEGAAASPSADQSQ.

One can recognise an ENT domain in the interval 16 to 100 (CKRILRKLEL…EWSIEGRRLV (85 aa)). The span at 149–177 (STTSTPPSASAPSSSSAAVKSPRPASPAS) shows a compositional bias: low complexity. Disordered regions lie at residues 149–179 (STTS…ASNV), 191–216 (KSVS…SSPV), 676–720 (NRSA…DAPP), 797–816 (SAEQ…ESDA), 905–998 (RVCE…GAQV), 1020–1046 (PRAP…EKPS), and 1139–1173 (DYTS…DQSQ). Over residues 683-693 (TTSTHTSAAAA) the composition is skewed to low complexity. Composition is skewed to low complexity over residues 911–921 (SSSSSSSSSSS) and 937–953 (SSSS…TPHT). 2 stretches are compositionally biased toward polar residues: residues 961 to 976 (QAPT…TQLS) and 989 to 998 (SSKTSSGAQV). A compositionally biased stretch (low complexity) spans 1025 to 1040 (SSSSSSEAALKLQAES). Residues 1148–1159 (EQAMEQEVDSSN) are compositionally biased toward acidic residues.

In terms of assembly, homodimer.

The protein resides in the nucleus. In terms of biological role, regulator which is able to repress transcription, possibly via its interaction with a multiprotein chromatin remodeling complex that modifies the chromatin. The polypeptide is BRCA2-interacting transcriptional repressor EMSY (Danio rerio (Zebrafish)).